The chain runs to 365 residues: tRNA N6-adenosine threonylcarbamoyltransferase (365 aa).

Residues histidine 119 and histidine 123 each coordinate Fe cation. Residues 141 to 145 (LVSGG), aspartate 174, glycine 187, and asparagine 288 contribute to the substrate site. Aspartate 316 contributes to the Fe cation binding site.

It belongs to the KAE1 / TsaD family. It depends on Fe(2+) as a cofactor.

It localises to the cytoplasm. It carries out the reaction L-threonylcarbamoyladenylate + adenosine(37) in tRNA = N(6)-L-threonylcarbamoyladenosine(37) in tRNA + AMP + H(+). In terms of biological role, required for the formation of a threonylcarbamoyl group on adenosine at position 37 (t(6)A37) in tRNAs that read codons beginning with adenine. Is involved in the transfer of the threonylcarbamoyl moiety of threonylcarbamoyl-AMP (TC-AMP) to the N6 group of A37, together with TsaE and TsaB. TsaD likely plays a direct catalytic role in this reaction. This Rhizobium etli (strain CIAT 652) protein is tRNA N6-adenosine threonylcarbamoyltransferase.